A 313-amino-acid chain; its full sequence is Formimidoylglutamase (313 aa).

Positions 130, 155, 157, 159, 241, and 243 each coordinate Mn(2+).

Belongs to the arginase family. The cofactor is Mn(2+).

The catalysed reaction is N-formimidoyl-L-glutamate + H2O = formamide + L-glutamate. It participates in amino-acid degradation; L-histidine degradation into L-glutamate; L-glutamate from N-formimidoyl-L-glutamate (hydrolase route): step 1/1. Its function is as follows. Catalyzes the conversion of N-formimidoyl-L-glutamate to L-glutamate and formamide. The chain is Formimidoylglutamase from Salmonella paratyphi A (strain ATCC 9150 / SARB42).